Reading from the N-terminus, the 148-residue chain is uncharacterized protein (148 aa).

The N-terminal stretch at 1–19 is a signal peptide; the sequence is MLSNAKLLLSLAMASTALG. Asn-41 and Asn-59 each carry an N-linked (GlcNAc...) asparagine glycan. Asn-127 carries the GPI-anchor amidated asparagine lipid modification. Positions 128–148 are cleaved as a propeptide — removed in mature form; that stretch reads AANARAIPGALGLAGAVMMLL.

The protein belongs to the SED1 family. The GPI-anchor is attached to the protein in the endoplasmic reticulum and serves to target the protein to the cell surface. There, the glucosamine-inositol phospholipid moiety is cleaved off and the GPI-modified mannoprotein is covalently attached via its lipidless GPI glycan remnant to the 1,6-beta-glucan of the outer cell wall layer.

Its subcellular location is the secreted. The protein resides in the cell wall. The protein localises to the membrane. Functionally, cell wall protein that plays a role in adaptation and resistance to cell wall stress. This is an uncharacterized protein from Saccharomyces cerevisiae (strain ATCC 204508 / S288c) (Baker's yeast).